A 193-amino-acid chain; its full sequence is Probable oligoribonuclease (193 aa).

The region spanning 15–177 is the Exonuclease domain; that stretch reads IIWIDCEMTG…DDIMESIAEL (163 aa). Residue Y136 is part of the active site.

Belongs to the oligoribonuclease family.

In terms of biological role, 3'-to-5' exoribonuclease specific for small oligoribonucleotides. The protein is Probable oligoribonuclease of Caenorhabditis elegans.